The following is a 500-amino-acid chain: NAD(P)H-quinone oxidoreductase subunit 2, chloroplastic (500 aa).

A run of 13 helical transmembrane segments spans residues 15–35 (ILPE…DLSL), 42–62 (WIIY…CLQW), 79–99 (FSIA…LLSI), 109–129 (LMEF…LCGA), 132–152 (LITI…LAGY), 167–187 (LLVG…LYGL), 201–221 (LIFA…CIIV), 247–267 (VVAF…IRII), 278–298 (WQFL…LVAI), 306–326 (MLAY…ISST), 334–354 (LVYM…VILF), 377–397 (ASCL…AGFF), and 400–420 (IYLF…VGLL).

This sequence belongs to the complex I subunit 2 family. As to quaternary structure, NDH is composed of at least 16 different subunits, 5 of which are encoded in the nucleus.

It localises to the plastid. The protein localises to the chloroplast thylakoid membrane. It carries out the reaction a plastoquinone + NADH + (n+1) H(+)(in) = a plastoquinol + NAD(+) + n H(+)(out). It catalyses the reaction a plastoquinone + NADPH + (n+1) H(+)(in) = a plastoquinol + NADP(+) + n H(+)(out). Functionally, NDH shuttles electrons from NAD(P)H:plastoquinone, via FMN and iron-sulfur (Fe-S) centers, to quinones in the photosynthetic chain and possibly in a chloroplast respiratory chain. The immediate electron acceptor for the enzyme in this species is believed to be plastoquinone. Couples the redox reaction to proton translocation, and thus conserves the redox energy in a proton gradient. This is NAD(P)H-quinone oxidoreductase subunit 2, chloroplastic from Chaetosphaeridium globosum (Charophycean green alga).